The sequence spans 382 residues: MIOREX complex component 5 (382 aa).

A mitochondrion-targeting transit peptide spans 1–12 (MRRTFSQLATRL).

Associates with the mitochondrial ribosome.

The protein localises to the mitochondrion. Its function is as follows. Component of MIOREX complexes, large expressome-like assemblies of ribosomes with factors involved in all the steps of post-transcriptional gene expression. The sequence is that of MIOREX complex component 5 from Saccharomyces cerevisiae (strain ATCC 204508 / S288c) (Baker's yeast).